Reading from the N-terminus, the 391-residue chain is Heme A synthase (391 aa).

8 helical membrane passes run 37–57, 121–141, 152–172, 186–206, 229–249, 298–318, 332–352, and 354–374; these read IRLW…VGGL, RQLG…FLAA, LLAL…MVAS, LATH…QALL, TTVL…VAGI, FLHR…WIFG, LLAM…LSAA, and WQVA…ILHA. His-300 contributes to the heme binding site. His-360 is a heme binding site.

The protein belongs to the COX15/CtaA family. Type 2 subfamily. As to quaternary structure, interacts with CtaB. The cofactor is heme b.

Its subcellular location is the cell membrane. It carries out the reaction Fe(II)-heme o + 2 A + H2O = Fe(II)-heme a + 2 AH2. The protein operates within porphyrin-containing compound metabolism; heme A biosynthesis; heme A from heme O: step 1/1. Catalyzes the conversion of heme O to heme A by two successive hydroxylations of the methyl group at C8. The first hydroxylation forms heme I, the second hydroxylation results in an unstable dihydroxymethyl group, which spontaneously dehydrates, resulting in the formyl group of heme A. The protein is Heme A synthase of Cereibacter sphaeroides (strain ATCC 17029 / ATH 2.4.9) (Rhodobacter sphaeroides).